Consider the following 92-residue polypeptide: Small ribosomal subunit protein bS20 (92 aa).

Disordered stretches follow at residues 1–25 (MALRHKSAQKRHRQSLKRRAINRAK) and 68–92 (HKNAAARKKSRLAKAINKAKAAQQA). The segment covering 80–92 (AKAINKAKAAQQA) has biased composition (low complexity).

This sequence belongs to the bacterial ribosomal protein bS20 family.

Its function is as follows. Binds directly to 16S ribosomal RNA. The sequence is that of Small ribosomal subunit protein bS20 from Deinococcus radiodurans (strain ATCC 13939 / DSM 20539 / JCM 16871 / CCUG 27074 / LMG 4051 / NBRC 15346 / NCIMB 9279 / VKM B-1422 / R1).